A 241-amino-acid polypeptide reads, in one-letter code: Terpene cyclase terB (241 aa).

5 helical membrane-spanning segments follow: residues Leu19–Ile39, Tyr48–Val68, Val75–Thr95, Leu114–Ile134, and Ala137–Cys157. Residue Asn163 is glycosylated (N-linked (GlcNAc...) asparagine). The next 2 helical transmembrane spans lie at Ser169–Leu189 and Phe198–Ile218.

Belongs to the paxB family.

The protein resides in the membrane. The protein operates within secondary metabolite biosynthesis. In terms of biological role, terpene cyclase; part of the gene cluster that mediates the biosynthesis of terpendoles, indole-diterpene (IDT) mycotoxins including terpendole I, terpendole K, terpendole C, as well as the kinesin Eg5 inhibitor terpendole E. Terpendoles biosynthesis begins with the synthesis of geranylgeranyl diphosphate (GGPP) by a yet unidentified GGPP synthase. Condensation of indole-3-glycerol phosphate with GGPP by the prenyltransferase terC then forms 3-geranylgeranylindole (3-GGI), followed by epoxidation and cyclization of this intermediate (by the FAD-dependent monooxygeanse terM and the terpene cyclase terB) to form paspaline. The cytochrome monooxygenase terQ then hydroxylates paspalline at C-11 to yield terpendole E. The cytochrome monooxygenase terP converts terpendole E to 13-desoxyterpendole I, and terQ converts 13-desoxyterpendole I into terpendole I. TerF and terK are required for conversion of terpendole I to terpendole C which is further converted to terpendole K. The polypeptide is Terpene cyclase terB (Tolypocladium album (Soil fungus)).